We begin with the raw amino-acid sequence, 203 residues long: Probable cytochrome c oxidase subunit 3 (203 aa).

5 helical membrane-spanning segments follow: residues 30–50 (IVWL…YFSA), 71–91 (VPVT…VFAA), 96–116 (IFGL…FVLG), 143–163 (ATGF…FLLV), and 179–199 (IVVS…FTVI).

This sequence belongs to the cytochrome c oxidase subunit 3 family.

The protein resides in the cell membrane. The catalysed reaction is 4 Fe(II)-[cytochrome c] + O2 + 8 H(+)(in) = 4 Fe(III)-[cytochrome c] + 2 H2O + 4 H(+)(out). This is Probable cytochrome c oxidase subunit 3 (ctaE) from Mycobacterium bovis (strain ATCC BAA-935 / AF2122/97).